We begin with the raw amino-acid sequence, 336 residues long: Calcium-gated potassium channel MthK (336 aa).

Over 1–20 (MVLVIEIIRKHLPRVLKVPA) the chain is Cytoplasmic. A helical membrane pass occupies residues 21 to 41 (TRILLLVLAVIIYGTAGFHFI). Residues 42–48 (EGESWTV) lie on the Extracellular side of the membrane. An intramembrane region (helical; Pore-forming) is located at residues 49 to 58 (SLYWTFVTIA). Residues 59–64 (TVGYGD) constitute an intramembrane region (pore-forming). Residues 59–64 (TVGYGD) carry the Selectivity filter motif. Residues 65-69 (YSPST) are Extracellular-facing. The chain crosses the membrane as a helical span at residues 70–95 (PLGMYFTVTLIVLGIGTFAVAVERLL). Over 96–106 (EFLINREQMKL) the chain is Cytoplasmic. In terms of domain architecture, RCK N-terminal spans 115–230 (SRHVVICGWS…RMAGADQVIS (116 aa)). Residues Asp184, Glu210, and Glu212 each coordinate Ca(2+). One can recognise an RCK C-terminal domain in the interval 252–336 (VQDVLAEEST…IERLKNYISA (85 aa)).

As to quaternary structure, homotetramer.

It is found in the cell membrane. In terms of biological role, calcium-gated potassium channel. In Methanothermobacter thermautotrophicus (strain ATCC 29096 / DSM 1053 / JCM 10044 / NBRC 100330 / Delta H) (Methanobacterium thermoautotrophicum), this protein is Calcium-gated potassium channel MthK (mthK).